Reading from the N-terminus, the 892-residue chain is MKTAEIRRRYLAHFEANGHAVVPSAPLPAISDPNLLFVAAGMMQFVPYFLGQQTAPYKRAVSVQKCLRTPDIDEVGKTSRHGTFFQMNGNFSFGDYFKDEAIPLAWELSTKPVDAGGLGLDPDRIWPTVYLDDDEAFQIWRSVGVPADRIVRRGKADNFWSMGIPGPCGPCSELFYDRGPEYGREGGPEVDEDRYLEFWNLVFMQFERGPGTGKEDYPILGDLPAKNIDTGMGLERMASILQGVDNLYEIDEVRPILAKAAELTGKRYGAHSGQVASESHPDDVRLRVVADHVRTALMLIGDGVIPSNEGRGYVLRRIMRRAIRSIRLLGWQERAMPELLPVARDCMSASYPELATDFGRIADYAYAEEDAFLSTLRAGTTILDTAIAETRTAGRRAISGAKAFQLHDTYGFPIDLTLEIASEQGLQVDAEGFRRLMADQRARAKADAQARKTGHVDLSAYRTVLDEGGPVTFTGYQEVSRESTVRAVLGAASPHAAAVEGETVELVLDTTPFYAEGGGQQPDLGVITVGGGQVEVLDVQQPVPGLIVHRARVLRGEVRVGETGFAEIDTDRRRAISRSHTATHLVHQTMRNFLGESATQAGSLNAPGRLRFDFNTPTGVAPSVLRDVEQQVNEALLADLEVRAFVTSLAEARRIGAMALFGEKYGEQVRVVEVGDYARELCGGTHVGRSGQLGLVKILSESSIGSGVRRVEALVGIDAFNFLAREHLLVARLAELYRVPSDQVAERVEQTVTQLRDAEKELEKLRAQLVLGGAAALAAQASEVRGVAYVGTEAPEGAAGNDVRTLAQEIRSRIDPARPAVVAVAARANGKASLVVAVNPAARSQGLSAADLVKVAFAGRGGGSPELAQGGGLPAAEAPGLLRTVENAIAGA.

Zn(2+)-binding residues include histidine 580, histidine 584, cysteine 682, and histidine 686.

Belongs to the class-II aminoacyl-tRNA synthetase family. Zn(2+) is required as a cofactor.

The protein localises to the cytoplasm. It carries out the reaction tRNA(Ala) + L-alanine + ATP = L-alanyl-tRNA(Ala) + AMP + diphosphate. Its function is as follows. Catalyzes the attachment of alanine to tRNA(Ala) in a two-step reaction: alanine is first activated by ATP to form Ala-AMP and then transferred to the acceptor end of tRNA(Ala). Also edits incorrectly charged Ser-tRNA(Ala) and Gly-tRNA(Ala) via its editing domain. This Salinispora tropica (strain ATCC BAA-916 / DSM 44818 / JCM 13857 / NBRC 105044 / CNB-440) protein is Alanine--tRNA ligase.